The primary structure comprises 107 residues: UPF0145 protein YbjQ (107 aa).

The protein belongs to the UPF0145 family.

The sequence is that of UPF0145 protein YbjQ from Salmonella dublin (strain CT_02021853).